Consider the following 265-residue polypeptide: Ribosomal RNA small subunit methyltransferase A (265 aa).

S-adenosyl-L-methionine contacts are provided by asparagine 13, leucine 15, glycine 39, glutamate 59, aspartate 87, and asparagine 108.

This sequence belongs to the class I-like SAM-binding methyltransferase superfamily. rRNA adenine N(6)-methyltransferase family. RsmA subfamily.

Its subcellular location is the cytoplasm. The catalysed reaction is adenosine(1518)/adenosine(1519) in 16S rRNA + 4 S-adenosyl-L-methionine = N(6)-dimethyladenosine(1518)/N(6)-dimethyladenosine(1519) in 16S rRNA + 4 S-adenosyl-L-homocysteine + 4 H(+). In terms of biological role, specifically dimethylates two adjacent adenosines (A1518 and A1519) in the loop of a conserved hairpin near the 3'-end of 16S rRNA in the 30S particle. May play a critical role in biogenesis of 30S subunits. In Aliarcobacter butzleri (strain RM4018) (Arcobacter butzleri), this protein is Ribosomal RNA small subunit methyltransferase A.